We begin with the raw amino-acid sequence, 177 residues long: Large ribosomal subunit protein bL19 (177 aa).

Belongs to the bacterial ribosomal protein bL19 family.

Functionally, this protein is located at the 30S-50S ribosomal subunit interface and may play a role in the structure and function of the aminoacyl-tRNA binding site. The protein is Large ribosomal subunit protein bL19 of Rhizobium meliloti (strain 1021) (Ensifer meliloti).